Reading from the N-terminus, the 665-residue chain is Protein kinase domain-containing protein ppk2 (665 aa).

Disordered stretches follow at residues proline 42–phenylalanine 63, glycine 82–serine 152, leucine 187–asparagine 217, and alanine 286–proline 343. The segment covering glycine 82–tryptophan 104 has biased composition (polar residues). Composition is skewed to low complexity over residues serine 137–serine 152 and threonine 206–asparagine 217. Residues serine 294–valine 316 show a composition bias toward polar residues. Serine 358 is subject to Phosphoserine. The region spanning tyrosine 388–leucine 637 is the Protein kinase domain. ATP is bound by residues isoleucine 394–threonine 402 and lysine 417.

Its subcellular location is the cytoplasm. The chain is Protein kinase domain-containing protein ppk2 (ppk2) from Schizosaccharomyces pombe (strain 972 / ATCC 24843) (Fission yeast).